The following is a 249-amino-acid chain: MRIENKQNKRQHHLLIVDDENNIRKILQTRLTLLGYSVSTACNGEEALKIFTTHSIDLIILDVMMPKLDGYGVCQEIRKESDIPIIMLTALEDVLDKVTGLELGADDYVIKPFSPRELEARIQSILRRIQTRNAKLKPYDNINLFKTGSLNIDLEKKQIYKNNELIRLTEMEFSLLELLVSQSGKAFSRSKILKEVWGYKLSKHEPIADTRIVDVHISRLRAKLEDDPTNPTLILTARGTGYLCRKLIT.

One can recognise a Response regulatory domain in the interval 13-126; that stretch reads HLLIVDDENN…ELEARIQSIL (114 aa). Asp62 is modified (4-aspartylphosphate). Positions 82–100 form a DNA-binding region, H-T-H motif; sequence DIPIIMLTALEDVLDKVTG. The segment at residues 142-246 is a DNA-binding region (ompR/PhoB-type); the sequence is INLFKTGSLN…ARGTGYLCRK (105 aa).

It localises to the plastid. Its subcellular location is the chloroplast. In terms of biological role, probable promoter-specific protein mediating the interaction between DNA and RNA polymerase. This chain is Probable transcriptional regulator ycf27 (ycf27), found in Cyanidium caldarium (Red alga).